The following is a 408-amino-acid chain: Succinylornithine transaminase (408 aa).

Lysine 252 is modified (N6-(pyridoxal phosphate)lysine).

It belongs to the class-III pyridoxal-phosphate-dependent aminotransferase family. AstC subfamily. Pyridoxal 5'-phosphate serves as cofactor.

It carries out the reaction N(2)-succinyl-L-ornithine + 2-oxoglutarate = N-succinyl-L-glutamate 5-semialdehyde + L-glutamate. It functions in the pathway amino-acid degradation; L-arginine degradation via AST pathway; L-glutamate and succinate from L-arginine: step 3/5. Functionally, catalyzes the transamination of N(2)-succinylornithine and alpha-ketoglutarate into N(2)-succinylglutamate semialdehyde and glutamate. Can also act as an acetylornithine aminotransferase. The protein is Succinylornithine transaminase of Salmonella paratyphi B (strain ATCC BAA-1250 / SPB7).